The primary structure comprises 128 residues: Ribosome-binding factor A (128 aa).

Belongs to the RbfA family. In terms of assembly, monomer. Binds 30S ribosomal subunits, but not 50S ribosomal subunits or 70S ribosomes.

Its subcellular location is the cytoplasm. One of several proteins that assist in the late maturation steps of the functional core of the 30S ribosomal subunit. Associates with free 30S ribosomal subunits (but not with 30S subunits that are part of 70S ribosomes or polysomes). Required for efficient processing of 16S rRNA. May interact with the 5'-terminal helix region of 16S rRNA. This is Ribosome-binding factor A from Idiomarina loihiensis (strain ATCC BAA-735 / DSM 15497 / L2-TR).